The following is a 111-amino-acid chain: Putative carnobacteriocin-B2 immunity protein (111 aa).

Its function is as follows. Could impart immunity to carnobacteriocin-B2 to naturally sensitive host strains. This chain is Putative carnobacteriocin-B2 immunity protein, found in Carnobacterium maltaromaticum (Carnobacterium piscicola).